Here is a 263-residue protein sequence, read N- to C-terminus: Oxidoreductase tpcG (263 aa).

It belongs to the avfA family. Specifically expressed in conidia.

It participates in secondary metabolite biosynthesis. In terms of biological role, oxidoreductase; part of the gene cluster that mediates the biosynthesis of trypacidin, a mycotoxin with antiprotozoal activity and that plays a role in the infection process. The pathway begins with the synthesis of atrochrysone thioester by the polyketide synthase (PKS) tpcC. The atrochrysone carboxyl ACP thioesterase tpcB then breaks the thioester bond and releases the atrochrysone carboxylic acid from tpcC. The decarboxylase tpcK converts atrochrysone carboxylic acid to atrochrysone which is further reduced into emodin anthrone. The next step is performed by the emodin anthrone oxygenase tpcL that catalyzes the oxidation of emodinanthrone to emodin. Emodin O-methyltransferase encoded by tpcA catalyzes methylation of the 8-hydroxy group of emodin to form questin. Ring cleavage of questin by questin oxidase tpcI leads to desmethylsulochrin via several intermediates including questin epoxide. Another methylation step catalyzed by tpcM leads to the formation of sulochrin which is further converted to monomethylsulfochrin by tpcH. Finally, the tpcJ catalyzes the conversion of monomethylsulfochrin to trypacidin. Trypacidin is toxic for human pulmonary and bronchial epithelial cells by initiating the intracellular formation of nitric oxide (NO) and hydrogen peroxide (H(2)O(2)), thus triggering host necrotic cell death. The trypacidin pathway is also able to produce endocrocin via a distinct route from the endocrocin Enc pathway. The chain is Oxidoreductase tpcG from Aspergillus fumigatus (strain ATCC MYA-4609 / CBS 101355 / FGSC A1100 / Af293) (Neosartorya fumigata).